The chain runs to 363 residues: MYLFQERIYNFGAGPAMLPNEVMEIAAAEFLNYKGSGMSVMEVSHREPLFEDVITEAEILLRKLLNLGEDYSIAFFSGGATLHFSALPLNLLKEGESFDVAHTGIWTKKAWEEGLKFNEVNVIYDSTNNHFTDVPVLTDSNLSGKGKYLHITSNNTIYGTQYPEIPKIKQIPLVADMTSELLSRKIDVKDFGVIFAGAQKNIGPSGLSLAIIRNDLLGISGRKIPILLDYSVMVKNRSLYNTPSTYSIYIAKLVFEWLLKLGGIEAIEKVNEQKAKLIYDFIDSSSLYVCPVQKRARSKMNVVFLLKDKNLDSKFLDEAEKNGLHGLGGHRLVGGFRASIYNSMPLTGVQKLVSFMKDFESKI.

An L-glutamate-binding site is contributed by Arg-46. Residues 80–81 (AT), Trp-106, Thr-156, Asp-176, and Gln-199 contribute to the pyridoxal 5'-phosphate site. An N6-(pyridoxal phosphate)lysine modification is found at Lys-200. 241 to 242 (NT) contributes to the pyridoxal 5'-phosphate binding site.

Belongs to the class-V pyridoxal-phosphate-dependent aminotransferase family. SerC subfamily. In terms of assembly, homodimer. It depends on pyridoxal 5'-phosphate as a cofactor.

The protein resides in the cytoplasm. The enzyme catalyses O-phospho-L-serine + 2-oxoglutarate = 3-phosphooxypyruvate + L-glutamate. It carries out the reaction 4-(phosphooxy)-L-threonine + 2-oxoglutarate = (R)-3-hydroxy-2-oxo-4-phosphooxybutanoate + L-glutamate. It participates in amino-acid biosynthesis; L-serine biosynthesis; L-serine from 3-phospho-D-glycerate: step 2/3. It functions in the pathway cofactor biosynthesis; pyridoxine 5'-phosphate biosynthesis; pyridoxine 5'-phosphate from D-erythrose 4-phosphate: step 3/5. Its function is as follows. Catalyzes the reversible conversion of 3-phosphohydroxypyruvate to phosphoserine and of 3-hydroxy-2-oxo-4-phosphonooxybutanoate to phosphohydroxythreonine. This is Phosphoserine aminotransferase from Leptospira interrogans serogroup Icterohaemorrhagiae serovar copenhageni (strain Fiocruz L1-130).